A 438-amino-acid chain; its full sequence is Glutamine synthetase (438 aa).

The GS beta-grasp domain maps to glutamate 14–threonine 98. In terms of domain architecture, GS catalytic spans proline 106–glutamine 438. The Mg(2+) site is built by glutamate 130 and glutamate 132. Position 208 (aspartate 208) interacts with ATP. Mg(2+) contacts are provided by glutamate 213 and glutamate 220. L-glutamate is bound by residues asparagine 264 to glycine 265 and glycine 265. A Mg(2+)-binding site is contributed by histidine 269. ATP contacts are provided by residues asparagine 271–serine 273 and serine 273. L-glutamate-binding residues include arginine 321, glutamate 327, and arginine 339. Residues arginine 339, arginine 344, and lysine 352 each contribute to the ATP site. Glutamate 357 provides a ligand contact to Mg(2+). Arginine 359 contributes to the L-glutamate binding site. Position 397 is an O-AMP-tyrosine (tyrosine 397).

Belongs to the glutamine synthetase family. Oligomer of 12 subunits arranged in the form of two hexameric ring. Mg(2+) serves as cofactor.

Its subcellular location is the cytoplasm. It catalyses the reaction L-glutamate + NH4(+) + ATP = L-glutamine + ADP + phosphate + H(+). With respect to regulation, the activity of this enzyme could be controlled by adenylation under conditions of abundant glutamine. Catalyzes the ATP-dependent biosynthesis of glutamine from glutamate and ammonia. In Rhodobacter capsulatus (Rhodopseudomonas capsulata), this protein is Glutamine synthetase.